The following is a 228-amino-acid chain: Triosephosphate isomerase (228 aa).

9 to 11 (NFK) lines the substrate pocket. Histidine 93 functions as the Electrophile in the catalytic mechanism. The Proton acceptor role is filled by glutamate 141. Substrate-binding positions include isoleucine 146, glycine 181, and 202–203 (AS).

Belongs to the triosephosphate isomerase family. In terms of assembly, homotetramer; dimer of dimers.

Its subcellular location is the cytoplasm. The enzyme catalyses D-glyceraldehyde 3-phosphate = dihydroxyacetone phosphate. It participates in carbohydrate biosynthesis; gluconeogenesis. It functions in the pathway carbohydrate degradation; glycolysis; D-glyceraldehyde 3-phosphate from glycerone phosphate: step 1/1. Functionally, involved in the gluconeogenesis. Catalyzes stereospecifically the conversion of dihydroxyacetone phosphate (DHAP) to D-glyceraldehyde-3-phosphate (G3P). In Pyrobaculum calidifontis (strain DSM 21063 / JCM 11548 / VA1), this protein is Triosephosphate isomerase.